Here is a 176-residue protein sequence, read N- to C-terminus: Magnesium-dependent phosphatase 1 (176 aa).

D11 functions as the Nucleophile in the catalytic mechanism. D11 contacts Mg(2+). Phosphate contacts are provided by L12 and D13. D13 serves as a coordination point for Mg(2+). D13 serves as the catalytic Proton donor. Position 20 (W20) interacts with substrate. Phosphate-binding residues include S69, R70, and K100. A substrate-binding site is contributed by R70. A Mg(2+)-binding site is contributed by D123.

Belongs to the HAD-like hydrolase superfamily. The cofactor is Mg(2+).

It catalyses the reaction O-phospho-L-tyrosyl-[protein] + H2O = L-tyrosyl-[protein] + phosphate. Inhibited by vanadate and zinc, and slightly by calcium. Its function is as follows. Magnesium-dependent phosphatase which may act as a tyrosine phosphatase. This chain is Magnesium-dependent phosphatase 1 (MDP1), found in Homo sapiens (Human).